Here is a 211-residue protein sequence, read N- to C-terminus: Endonuclease III (211 aa).

The 20-residue stretch at 108–127 (REALEALAGVGRKTANVVLN) folds into the HhH domain. The [4Fe-4S] cluster site is built by Cys-187, Cys-194, Cys-197, and Cys-203.

It belongs to the Nth/MutY family. [4Fe-4S] cluster serves as cofactor.

The enzyme catalyses 2'-deoxyribonucleotide-(2'-deoxyribose 5'-phosphate)-2'-deoxyribonucleotide-DNA = a 3'-end 2'-deoxyribonucleotide-(2,3-dehydro-2,3-deoxyribose 5'-phosphate)-DNA + a 5'-end 5'-phospho-2'-deoxyribonucleoside-DNA + H(+). DNA repair enzyme that has both DNA N-glycosylase activity and AP-lyase activity. The DNA N-glycosylase activity releases various damaged pyrimidines from DNA by cleaving the N-glycosidic bond, leaving an AP (apurinic/apyrimidinic) site. The AP-lyase activity cleaves the phosphodiester bond 3' to the AP site by a beta-elimination, leaving a 3'-terminal unsaturated sugar and a product with a terminal 5'-phosphate. The chain is Endonuclease III from Haemophilus influenzae (strain ATCC 51907 / DSM 11121 / KW20 / Rd).